The chain runs to 241 residues: tRNA pseudouridine synthase A (241 aa).

The Nucleophile role is filled by aspartate 53. Tyrosine 110 is a binding site for substrate.

This sequence belongs to the tRNA pseudouridine synthase TruA family. In terms of assembly, homodimer.

It carries out the reaction uridine(38/39/40) in tRNA = pseudouridine(38/39/40) in tRNA. Formation of pseudouridine at positions 38, 39 and 40 in the anticodon stem and loop of transfer RNAs. The chain is tRNA pseudouridine synthase A from Malacoplasma penetrans (strain HF-2) (Mycoplasma penetrans).